Here is a 640-residue protein sequence, read N- to C-terminus: 1-deoxy-D-xylulose-5-phosphate synthase (640 aa).

Thiamine diphosphate contacts are provided by residues His-79 and 120–122 (GHS). Asp-151 is a Mg(2+) binding site. Residues 152–153 (GS), Asn-180, Tyr-290, and Glu-372 each bind thiamine diphosphate. Residue Asn-180 participates in Mg(2+) binding.

The protein belongs to the transketolase family. DXPS subfamily. As to quaternary structure, homodimer. Mg(2+) is required as a cofactor. Requires thiamine diphosphate as cofactor.

It catalyses the reaction D-glyceraldehyde 3-phosphate + pyruvate + H(+) = 1-deoxy-D-xylulose 5-phosphate + CO2. The protein operates within metabolic intermediate biosynthesis; 1-deoxy-D-xylulose 5-phosphate biosynthesis; 1-deoxy-D-xylulose 5-phosphate from D-glyceraldehyde 3-phosphate and pyruvate: step 1/1. Functionally, catalyzes the acyloin condensation reaction between C atoms 2 and 3 of pyruvate and glyceraldehyde 3-phosphate to yield 1-deoxy-D-xylulose-5-phosphate (DXP). The chain is 1-deoxy-D-xylulose-5-phosphate synthase from Rhodopseudomonas palustris (strain BisA53).